Consider the following 382-residue polypeptide: MPSGCRCLNLVCLLCILGATSQPARADDCSSHCDLAHGCCAPDGSCRCDPGWEGLHCERCVRMPGCQHGTCHQPWQCICHSGWAGKFCDKDEHICTSQSPCQNGGQCVYDGGGEYHCVCLPGFHGRGCERKAGPCEQAGFPCRNGGQCQDNQGFALNFTCRCLAGFMGAHCEVNVDDCLMRPCANGATCIDGINRFSCLCPEGFAGRFCTINLDDCASRPCQRGARCRDRVHDFDCLCPSGYGGKTCELVLPAPEPASVGTPQMPTSAVVVPATGPAPHSAGAGLLRISVKEVVRRQESGLGESSLVALVVFGSLTAALVLATVLLTLRAWRRGICPTGPCCYPAPHYAPARQDQECQVSMLPAGFPLSPDLPPEPGKTTAL.

Residues methionine 1–alanine 26 form the signal peptide. EGF-like domains lie at aspartate 27–glutamate 58, arginine 62–aspartate 89, aspartate 91–glutamate 129, and lysine 131–glutamate 172. The Extracellular segment spans residues aspartate 27 to serine 305. 17 cysteine pairs are disulfide-bonded: cysteine 29–cysteine 40, cysteine 33–cysteine 46, cysteine 48–cysteine 57, cysteine 66–cysteine 71, cysteine 79–cysteine 88, cysteine 95–cysteine 107, cysteine 101–cysteine 117, cysteine 119–cysteine 128, cysteine 135–cysteine 148, cysteine 142–cysteine 160, cysteine 162–cysteine 171, cysteine 178–cysteine 189, cysteine 183–cysteine 198, cysteine 200–cysteine 209, cysteine 216–cysteine 227, cysteine 221–cysteine 236, and cysteine 238–cysteine 247. An N-linked (GlcNAc...) asparagine glycan is attached at asparagine 157. Residues asparagine 174–threonine 210 form the EGF-like 5; calcium-binding domain. Residues asparagine 212 to glutamate 248 form the EGF-like 6; calcium-binding domain. The chain crosses the membrane as a helical span at residues leucine 306–leucine 326. Topologically, residues threonine 327–leucine 382 are cytoplasmic.

As to expression, detected in a number of tissues including lung, brain, adrenal gland, testis, adult liver, placenta, ovary and thymus. Not detected in fetal liver or in adult spleen, muscle and heart.

Its subcellular location is the membrane. In terms of biological role, regulates adipogenesis. This is Protein delta homolog 2 (Dlk2) from Mus musculus (Mouse).